Reading from the N-terminus, the 142-residue chain is Small ribosomal subunit protein uS12z (142 aa).

The residue at position 61 (Pro-61) is a Hydroxyproline.

It belongs to the universal ribosomal protein uS12 family.

The sequence is that of Small ribosomal subunit protein uS12z (RPS23A) from Arabidopsis thaliana (Mouse-ear cress).